Consider the following 126-residue polypeptide: MAAEEATLTVRLIRSFEHRNFKPVVYHGVNLHQTVKEFIIFLKQDVPLRTSLPPPLRNYKYDTLKILHQAHKAKTNELVLGLEDDDTLLLKEDRTLKDSGVASETEIAFFCGEDYKRYKANPISSW.

This sequence belongs to the UPF0538 family.

This Mus musculus (Mouse) protein is UPF0538 protein C2orf76 homolog.